Here is a 665-residue protein sequence, read N- to C-terminus: Macrolide export ATP-binding/permease protein MacB (665 aa).

The ABC transporter domain occupies 17-255 (MQVKGLIREF…AAQPASIIDK (239 aa)). Position 53–60 (53–60 (GQSGSGKS)) interacts with ATP. The next 4 membrane-spanning stretches (helical) occupy residues 287 to 307 (LLTM…VGLG), 544 to 564 (IAII…LVSV), 588 to 608 (FLIE…GLAF), and 630 to 650 (SIIA…FLPA).

This sequence belongs to the ABC transporter superfamily. Macrolide exporter (TC 3.A.1.122) family. In terms of assembly, homodimer. Part of the tripartite efflux system MacAB-TolC, which is composed of an inner membrane transporter, MacB, a periplasmic membrane fusion protein, MacA, and an outer membrane component, TolC. The complex forms a large protein conduit and can translocate molecules across both the inner and outer membranes. Interacts with MacA.

It is found in the cell inner membrane. Part of the tripartite efflux system MacAB-TolC. MacB is a non-canonical ABC transporter that contains transmembrane domains (TMD), which form a pore in the inner membrane, and an ATP-binding domain (NBD), which is responsible for energy generation. Confers resistance against macrolides. The sequence is that of Macrolide export ATP-binding/permease protein MacB from Psychrobacter cryohalolentis (strain ATCC BAA-1226 / DSM 17306 / VKM B-2378 / K5).